The following is a 225-amino-acid chain: Orotate phosphoribosyltransferase (225 aa).

Lysine 31 contributes to the 5-phospho-alpha-D-ribose 1-diphosphate binding site. 39–40 (FF) is a binding site for orotate. Residues 78–79 (YK), arginine 105, lysine 106, lysine 109, histidine 111, and 130–138 (DDVLTSGKA) each bind 5-phospho-alpha-D-ribose 1-diphosphate. Orotate contacts are provided by threonine 134 and arginine 163.

It belongs to the purine/pyrimidine phosphoribosyltransferase family. PyrE subfamily. As to quaternary structure, homodimer.

It carries out the reaction orotidine 5'-phosphate + diphosphate = orotate + 5-phospho-alpha-D-ribose 1-diphosphate. Its pathway is pyrimidine metabolism; UMP biosynthesis via de novo pathway; UMP from orotate: step 1/2. Catalyzes the transfer of a ribosyl phosphate group from 5-phosphoribose 1-diphosphate to orotate, leading to the formation of orotidine monophosphate (OMP). The protein is Orotate phosphoribosyltransferase (URA5) of Cryptococcus neoformans var. grubii serotype A (strain H99 / ATCC 208821 / CBS 10515 / FGSC 9487) (Filobasidiella neoformans var. grubii).